We begin with the raw amino-acid sequence, 147 residues long: Gastrin-releasing peptide (147 aa).

The signal sequence occupies residues 1 to 23 (MRGSELSLLLLALVLCQAPRGPA). M52 is subject to Methionine amide. Positions 56-147 (STDELPPLYA…VLKGKEGTAS (92 aa)) are excised as a propeptide. Positions 95–123 (AGNRSHQPPQDQPLGSLQPTWDPEDGSYF) are disordered. Residues 98–113 (RSHQPPQDQPLGSLQP) are compositionally biased toward polar residues.

Belongs to the bombesin/neuromedin-B/ranatensin family. As to expression, expressed in several dozen cells in the dorsal retrotrapezoid nucleus/parafacial respiratory group (at protein level).

It localises to the secreted. The protein localises to the cytoplasmic vesicle. It is found in the secretory vesicle lumen. Its subcellular location is the cell projection. The protein resides in the neuron projection. Its function is as follows. Stimulates the release of gastrin and other gastrointestinal hormones. Contributes to the perception of prurient stimuli and to the transmission of itch signals in the spinal cord that promote scratching behavior. Contributes primarily to nonhistaminergic itch sensation. In one study, shown to act in the amygdala as part of an inhibitory network which inhibits memory specifically related to learned fear. In another study, shown to act on vasoactive intestinal peptide (VIP)-expressing cells in the auditory cortex, most likely via extrasynaptic diffusion from local and long-range sources, to mediate disinhibition of glutamatergic cells via VIP cell-specific GRPR signaling which leads to enhanced auditory fear memories. Contributes to the regulation of food intake. Inhibits voltage-gated sodium channels but enhances voltage-gated potassium channels in hippocampal neurons. Induces sighing by acting directly on the pre-Botzinger complex, a cluster of several thousand neurons in the ventrolateral medulla responsible for inspiration during respiratory activity. In terms of biological role, induces an itch response through activation of receptors present on mast cells, triggering mast cell degranulation. The chain is Gastrin-releasing peptide (Grp) from Rattus norvegicus (Rat).